Consider the following 399-residue polypeptide: Tryptophan synthase beta chain (399 aa).

Lys-92 carries the N6-(pyridoxal phosphate)lysine modification.

The protein belongs to the TrpB family. As to quaternary structure, tetramer of two alpha and two beta chains. The cofactor is pyridoxal 5'-phosphate.

The enzyme catalyses (1S,2R)-1-C-(indol-3-yl)glycerol 3-phosphate + L-serine = D-glyceraldehyde 3-phosphate + L-tryptophan + H2O. Its pathway is amino-acid biosynthesis; L-tryptophan biosynthesis; L-tryptophan from chorismate: step 5/5. Its function is as follows. The beta subunit is responsible for the synthesis of L-tryptophan from indole and L-serine. This is Tryptophan synthase beta chain from Bordetella bronchiseptica (strain ATCC BAA-588 / NCTC 13252 / RB50) (Alcaligenes bronchisepticus).